The chain runs to 258 residues: Alpha-fibrinogenase-like (258 aa).

Residues Met-1–Ala-18 form the signal peptide. A propeptide spanning residues Gln-19–Leu-24 is cleaved from the precursor. Positions Val-25–Ala-249 constitute a Peptidase S1 domain. Disulfide bonds link Cys-31–Cys-163, Cys-50–Cys-66, Cys-98–Cys-256, Cys-142–Cys-210, Cys-174–Cys-189, and Cys-200–Cys-225. Asn-44 carries an N-linked (GlcNAc...) asparagine glycan. Residues His-65 and Asp-110 each act as charge relay system in the active site. Catalysis depends on Ser-204, which acts as the Charge relay system.

This sequence belongs to the peptidase S1 family. Snake venom subfamily. Monomer. Expressed by the venom gland.

It localises to the secreted. Functionally, degrades alpha chain of fibrinogen (FGA), and has strong caseinolytic activity. Cleaves oxidized insulin B-chain at '40-Tyr-|-Leu-41', '48-Phe-|-Phe-49' and '49-Phe-|-Tyr-50', and glucagon at the bonds '62-Tyr-|-Ser-63', 66-Leu-|-Asp-67' and '78-Leu-|-Met-79' bonds. This chain is Alpha-fibrinogenase-like, found in Daboia siamensis (Eastern Russel's viper).